The primary structure comprises 87 residues: U3-theraphotoxin-Hhn1a 5 (87 aa).

The N-terminal stretch at 1 to 24 (MVNMKASMFLTFAGLVLLFVVCYA) is a signal peptide. The propeptide occupies 25–52 (SESEEKEFPKEMLSSIFAVDNDFKQEER). Disulfide bonds link Cys-54–Cys-67, Cys-61–Cys-72, and Cys-66–Cys-79.

Belongs to the neurotoxin 10 (Hwtx-1) family. 51 (Hntx-8) subfamily. Hntx-8 sub-subfamily. In terms of tissue distribution, expressed by the venom gland.

It is found in the secreted. In terms of biological role, ion channel inhibitor. This Cyriopagopus hainanus (Chinese bird spider) protein is U3-theraphotoxin-Hhn1a 5.